The following is a 95-amino-acid chain: Co-chaperonin GroES (95 aa).

This sequence belongs to the GroES chaperonin family. Heptamer of 7 subunits arranged in a ring. Interacts with the chaperonin GroEL.

The protein localises to the cytoplasm. In terms of biological role, together with the chaperonin GroEL, plays an essential role in assisting protein folding. The GroEL-GroES system forms a nano-cage that allows encapsulation of the non-native substrate proteins and provides a physical environment optimized to promote and accelerate protein folding. GroES binds to the apical surface of the GroEL ring, thereby capping the opening of the GroEL channel. The protein is Co-chaperonin GroES of Aliivibrio salmonicida (strain LFI1238) (Vibrio salmonicida (strain LFI1238)).